A 244-amino-acid polypeptide reads, in one-letter code: DNA repair protein RecO (244 aa).

This sequence belongs to the RecO family.

In terms of biological role, involved in DNA repair and RecF pathway recombination. This Koribacter versatilis (strain Ellin345) protein is DNA repair protein RecO.